Reading from the N-terminus, the 142-residue chain is Small ribosomal subunit protein uS12 (142 aa).

The interval 1-30 is disordered; it reads MGKTHGMGAARKLKSHRRTQRWADKSYKKS. The span at 11–20 shows a compositional bias: basic residues; sequence RKLKSHRRTQ. Residues 21–30 are compositionally biased toward basic and acidic residues; that stretch reads RWADKSYKKS. Residue proline 61 is modified to Hydroxyproline.

Belongs to the universal ribosomal protein uS12 family.

The polypeptide is Small ribosomal subunit protein uS12 (RPS23) (Euphorbia esula (Leafy spurge)).